Reading from the N-terminus, the 394-residue chain is 1-deoxy-D-xylulose 5-phosphate reductoisomerase (394 aa).

The NADPH site is built by Thr-12, Gly-13, Ser-14, Ile-15, Gly-38, Asn-41, and Asn-132. 1-deoxy-D-xylulose 5-phosphate is bound at residue Lys-133. Glu-134 contributes to the NADPH binding site. Residue Asp-156 coordinates Mn(2+). Residues Ser-157, Glu-158, Ser-182, and His-205 each contribute to the 1-deoxy-D-xylulose 5-phosphate site. Glu-158 serves as a coordination point for Mn(2+). Gly-211 serves as a coordination point for NADPH. Residues Ser-218, Asn-223, Lys-224, and Glu-227 each contribute to the 1-deoxy-D-xylulose 5-phosphate site. Glu-227 serves as a coordination point for Mn(2+).

It belongs to the DXR family. Requires Mg(2+) as cofactor. The cofactor is Mn(2+).

The enzyme catalyses 2-C-methyl-D-erythritol 4-phosphate + NADP(+) = 1-deoxy-D-xylulose 5-phosphate + NADPH + H(+). The protein operates within isoprenoid biosynthesis; isopentenyl diphosphate biosynthesis via DXP pathway; isopentenyl diphosphate from 1-deoxy-D-xylulose 5-phosphate: step 1/6. Its function is as follows. Catalyzes the NADPH-dependent rearrangement and reduction of 1-deoxy-D-xylulose-5-phosphate (DXP) to 2-C-methyl-D-erythritol 4-phosphate (MEP). This chain is 1-deoxy-D-xylulose 5-phosphate reductoisomerase, found in Pseudarthrobacter chlorophenolicus (strain ATCC 700700 / DSM 12829 / CIP 107037 / JCM 12360 / KCTC 9906 / NCIMB 13794 / A6) (Arthrobacter chlorophenolicus).